Reading from the N-terminus, the 215-residue chain is Adenylate kinase (215 aa).

ATP is bound at residue 10 to 15; that stretch reads GAGKGT. Residues 30-59 form an NMP region; that stretch reads STGDMLRSAIKSGSELGKKAKQVMDAGQLV. AMP-binding positions include threonine 31, arginine 36, 57–59, 85–88, and glutamine 92; these read QLV and GFPR. The segment at 122 to 159 is LID; it reads GRRVHPGSGRVYHVEHNPPKVEGKDDETGEDLVVRPDD. ATP-binding positions include arginine 123 and 132 to 133; that span reads VY. Positions 128–151 are disordered; sequence GSGRVYHVEHNPPKVEGKDDETGE. Positions 133–144 are enriched in basic and acidic residues; the sequence is YHVEHNPPKVEG. Arginine 156 and arginine 167 together coordinate AMP. The disordered stretch occupies residues 195–215; that stretch reads KIDGTQPVERVSEQLGDLLRK. An ATP-binding site is contributed by glutamine 200.

The protein belongs to the adenylate kinase family. Monomer.

It is found in the cytoplasm. The enzyme catalyses AMP + ATP = 2 ADP. The protein operates within purine metabolism; AMP biosynthesis via salvage pathway; AMP from ADP: step 1/1. Its function is as follows. Catalyzes the reversible transfer of the terminal phosphate group between ATP and AMP. Plays an important role in cellular energy homeostasis and in adenine nucleotide metabolism. The protein is Adenylate kinase of Idiomarina loihiensis (strain ATCC BAA-735 / DSM 15497 / L2-TR).